The sequence spans 283 residues: MPELPEVETVMRGLQPSMEGVVIARADVNRPDLRWPFPDRMTERLSGRRVLSMRRRSKYILADLDSGETLLVHLGMSGRMTVSGDPLGQFVHSHPQLEKHDHVVFHMDNGARVTFNDPRRFGAMDLLETAKADSHKLLAVLGPEPLGNDFHESHLVSAFKGRRTPVKSALLDQGIIAGLGNIYVCEALFRAGISPRREAGKISTSRVTSLVPIIRQVLQDAIAAGGSSLKDFRQANGELGYFQHTFDVYGREGEPCRRAGCTGTVTRITQSGRSSFYCGKCQR.

Residue proline 2 is the Schiff-base intermediate with DNA of the active site. Glutamate 3 (proton donor) is an active-site residue. Lysine 58 (proton donor; for beta-elimination activity) is an active-site residue. DNA contacts are provided by histidine 100, arginine 119, and arginine 162. The segment at 247–283 (DVYGREGEPCRRAGCTGTVTRITQSGRSSFYCGKCQR) adopts an FPG-type zinc-finger fold. The Proton donor; for delta-elimination activity role is filled by arginine 273.

Belongs to the FPG family. In terms of assembly, monomer. The cofactor is Zn(2+).

The catalysed reaction is Hydrolysis of DNA containing ring-opened 7-methylguanine residues, releasing 2,6-diamino-4-hydroxy-5-(N-methyl)formamidopyrimidine.. It catalyses the reaction 2'-deoxyribonucleotide-(2'-deoxyribose 5'-phosphate)-2'-deoxyribonucleotide-DNA = a 3'-end 2'-deoxyribonucleotide-(2,3-dehydro-2,3-deoxyribose 5'-phosphate)-DNA + a 5'-end 5'-phospho-2'-deoxyribonucleoside-DNA + H(+). Involved in base excision repair of DNA damaged by oxidation or by mutagenic agents. Acts as a DNA glycosylase that recognizes and removes damaged bases. Has a preference for oxidized purines, such as 7,8-dihydro-8-oxoguanine (8-oxoG). Has AP (apurinic/apyrimidinic) lyase activity and introduces nicks in the DNA strand. Cleaves the DNA backbone by beta-delta elimination to generate a single-strand break at the site of the removed base with both 3'- and 5'-phosphates. The sequence is that of Formamidopyrimidine-DNA glycosylase from Ruegeria sp. (strain TM1040) (Silicibacter sp.).